Consider the following 207-residue polypeptide: Nitrophorin-1 (207 aa).

An N-terminal signal peptide occupies residues methionine 1–glycine 23. Cystine bridges form between cysteine 25/cysteine 145 and cysteine 64/cysteine 194. Histidine 82 provides a ligand contact to heme.

The protein belongs to the calycin superfamily. Nitrophorin family. As to expression, salivary gland (at protein level).

Its subcellular location is the secreted. Heme-based protein that deliver nitric oxide gas (NO) to the victim while feeding, resulting in vasodilation and inhibition of platelet aggregation. Reversibly binds nitric oxide (NO). Also binds tightly to histamine, which is released by the host to induce wound healing. This chain is Nitrophorin-1, found in Rhodnius prolixus (Triatomid bug).